The primary structure comprises 40 residues: Photosystem II reaction center protein J (40 aa).

A helical transmembrane segment spans residues 8–28 (IPLWLIGTVTGILVIGLLGIF).

Belongs to the PsbJ family. As to quaternary structure, PSII is composed of 1 copy each of membrane proteins PsbA, PsbB, PsbC, PsbD, PsbE, PsbF, PsbH, PsbI, PsbJ, PsbK, PsbL, PsbM, PsbT, PsbX, PsbY, PsbZ, Psb30/Ycf12, at least 3 peripheral proteins of the oxygen-evolving complex and a large number of cofactors. It forms dimeric complexes.

Its subcellular location is the plastid. It localises to the chloroplast thylakoid membrane. One of the components of the core complex of photosystem II (PSII). PSII is a light-driven water:plastoquinone oxidoreductase that uses light energy to abstract electrons from H(2)O, generating O(2) and a proton gradient subsequently used for ATP formation. It consists of a core antenna complex that captures photons, and an electron transfer chain that converts photonic excitation into a charge separation. The protein is Photosystem II reaction center protein J of Angiopteris evecta (Mule's foot fern).